A 257-amino-acid chain; its full sequence is Phosphate import ATP-binding protein PstB (257 aa).

The 242-residue stretch at 5–246 (LEIKDLTAFY…EVIFTSPKNE (242 aa)) folds into the ABC transporter domain. 37 to 44 (GPSGCGKS) lines the ATP pocket.

Belongs to the ABC transporter superfamily. Phosphate importer (TC 3.A.1.7) family. As to quaternary structure, the complex is composed of two ATP-binding proteins (PstB), two transmembrane proteins (PstC and PstA) and a solute-binding protein (PstS).

It is found in the cell membrane. It catalyses the reaction phosphate(out) + ATP + H2O = ADP + 2 phosphate(in) + H(+). Its function is as follows. Part of the ABC transporter complex PstSACB involved in phosphate import. Responsible for energy coupling to the transport system. The polypeptide is Phosphate import ATP-binding protein PstB (Tropheryma whipplei (strain Twist) (Whipple's bacillus)).